The following is a 311-amino-acid chain: Ornithine carbamoyltransferase (311 aa).

Residues 59–62 (STRT), Gln-86, Arg-110, and 137–140 (HPCQ) contribute to the carbamoyl phosphate site. L-ornithine contacts are provided by residues Asn-168, Asp-228, and 232-233 (SM). Residues 267-268 (CL) and Arg-295 each bind carbamoyl phosphate.

The protein belongs to the aspartate/ornithine carbamoyltransferase superfamily. OTCase family.

Its subcellular location is the cytoplasm. The enzyme catalyses carbamoyl phosphate + L-ornithine = L-citrulline + phosphate + H(+). The protein operates within amino-acid biosynthesis; L-arginine biosynthesis; L-arginine from L-ornithine and carbamoyl phosphate: step 1/3. In terms of biological role, reversibly catalyzes the transfer of the carbamoyl group from carbamoyl phosphate (CP) to the N(epsilon) atom of ornithine (ORN) to produce L-citrulline. The chain is Ornithine carbamoyltransferase from Caulobacter vibrioides (strain ATCC 19089 / CIP 103742 / CB 15) (Caulobacter crescentus).